We begin with the raw amino-acid sequence, 304 residues long: Putative S-adenosyl-L-methionine-dependent methyltransferase MAV_4236 (304 aa).

S-adenosyl-L-methionine is bound by residues aspartate 129 and aspartate 158–leucine 159.

The protein belongs to the UPF0677 family.

In terms of biological role, exhibits S-adenosyl-L-methionine-dependent methyltransferase activity. The polypeptide is Putative S-adenosyl-L-methionine-dependent methyltransferase MAV_4236 (Mycobacterium avium (strain 104)).